Here is a 574-residue protein sequence, read N- to C-terminus: Putative ABC transporter ATP-binding protein VV2_1533 (574 aa).

2 ABC transporter domains span residues 3 to 244 (IEFS…GIRE) and 299 to 533 (LDVR…ANLT). ATP-binding positions include 37–44 (GPSGSGKS) and 332–339 (GKNGSGKS).

The protein belongs to the ABC transporter superfamily.

It is found in the cell inner membrane. In terms of biological role, probably part of an ABC transporter complex. Responsible for energy coupling to the transport system. This chain is Putative ABC transporter ATP-binding protein VV2_1533, found in Vibrio vulnificus (strain CMCP6).